The primary structure comprises 87 residues: Small ribosomal subunit protein uS19 (87 aa).

Residues 1 to 29 (MARSLKKGPFVDHHLQKKVDVQNKEGTKK) form a disordered region. Basic and acidic residues predominate over residues 9–28 (PFVDHHLQKKVDVQNKEGTK).

This sequence belongs to the universal ribosomal protein uS19 family.

Functionally, protein S19 forms a complex with S13 that binds strongly to the 16S ribosomal RNA. The sequence is that of Small ribosomal subunit protein uS19 from Protochlamydia amoebophila (strain UWE25).